Reading from the N-terminus, the 239-residue chain is Ribonuclease PH (239 aa).

Phosphate contacts are provided by residues R86 and 124–126 (GTR).

Belongs to the RNase PH family. In terms of assembly, homohexameric ring arranged as a trimer of dimers.

It carries out the reaction tRNA(n+1) + phosphate = tRNA(n) + a ribonucleoside 5'-diphosphate. Its function is as follows. Phosphorolytic 3'-5' exoribonuclease that plays an important role in tRNA 3'-end maturation. Removes nucleotide residues following the 3'-CCA terminus of tRNAs; can also add nucleotides to the ends of RNA molecules by using nucleoside diphosphates as substrates, but this may not be physiologically important. Probably plays a role in initiation of 16S rRNA degradation (leading to ribosome degradation) during starvation. This chain is Ribonuclease PH, found in Cupriavidus taiwanensis (strain DSM 17343 / BCRC 17206 / CCUG 44338 / CIP 107171 / LMG 19424 / R1) (Ralstonia taiwanensis (strain LMG 19424)).